The primary structure comprises 339 residues: Phosphate acyltransferase (339 aa).

Belongs to the PlsX family. As to quaternary structure, homodimer. Probably interacts with PlsY.

It localises to the cytoplasm. It carries out the reaction a fatty acyl-[ACP] + phosphate = an acyl phosphate + holo-[ACP]. It functions in the pathway lipid metabolism; phospholipid metabolism. Its function is as follows. Catalyzes the reversible formation of acyl-phosphate (acyl-PO(4)) from acyl-[acyl-carrier-protein] (acyl-ACP). This enzyme utilizes acyl-ACP as fatty acyl donor, but not acyl-CoA. The chain is Phosphate acyltransferase from Ruthia magnifica subsp. Calyptogena magnifica.